The sequence spans 140 residues: Large-conductance mechanosensitive channel 2 (140 aa).

3 helical membrane-spanning segments follow: residues 8-28 (FISK…AAFG), 30-50 (IVDS…FGGL), and 81-101 (GSFI…FLMV).

The protein belongs to the MscL family. Homopentamer.

It is found in the cell inner membrane. In terms of biological role, channel that opens in response to stretch forces in the membrane lipid bilayer. May participate in the regulation of osmotic pressure changes within the cell. The protein is Large-conductance mechanosensitive channel 2 of Mesorhizobium japonicum (strain LMG 29417 / CECT 9101 / MAFF 303099) (Mesorhizobium loti (strain MAFF 303099)).